Here is a 405-residue protein sequence, read N- to C-terminus: S-adenosylmethionine synthase (405 aa).

139 to 144 provides a ligand contact to ATP; that stretch reads GQGSVD.

This sequence belongs to the AdoMet synthase 2 family. It depends on Mg(2+) as a cofactor.

It carries out the reaction L-methionine + ATP + H2O = S-adenosyl-L-methionine + phosphate + diphosphate. Its pathway is amino-acid biosynthesis; S-adenosyl-L-methionine biosynthesis; S-adenosyl-L-methionine from L-methionine: step 1/1. In terms of biological role, catalyzes the formation of S-adenosylmethionine from methionine and ATP. The protein is S-adenosylmethionine synthase of Thermococcus onnurineus (strain NA1).